The following is a 495-amino-acid chain: Glycogen synthase (495 aa).

Lys24 is a binding site for ADP-alpha-D-glucose.

The protein belongs to the glycosyltransferase 1 family. Bacterial/plant glycogen synthase subfamily.

The enzyme catalyses [(1-&gt;4)-alpha-D-glucosyl](n) + ADP-alpha-D-glucose = [(1-&gt;4)-alpha-D-glucosyl](n+1) + ADP + H(+). The protein operates within glycan biosynthesis; glycogen biosynthesis. Synthesizes alpha-1,4-glucan chains using ADP-glucose. In Nitrosomonas europaea (strain ATCC 19718 / CIP 103999 / KCTC 2705 / NBRC 14298), this protein is Glycogen synthase.